Consider the following 371-residue polypeptide: Fructose-1,6-bisphosphatase class 1 1 (371 aa).

E115, D134, L136, and D137 together coordinate Mg(2+). Residues 137 to 140, N228, and 280 to 282 each bind substrate; these read DGSS and YLY. Mg(2+) is bound at residue E300.

Belongs to the FBPase class 1 family. As to quaternary structure, homotetramer. Requires Mg(2+) as cofactor.

The protein localises to the cytoplasm. The catalysed reaction is beta-D-fructose 1,6-bisphosphate + H2O = beta-D-fructose 6-phosphate + phosphate. Its pathway is carbohydrate biosynthesis; gluconeogenesis. This Xanthobacter autotrophicus (strain ATCC BAA-1158 / Py2) protein is Fructose-1,6-bisphosphatase class 1 1.